The sequence spans 208 residues: Small ribosomal subunit protein uS3 (208 aa).

Residues 16–85 form the KH type-2 domain; that stretch reads VDEYLKNKLP…KPQIEVKQIE (70 aa).

Belongs to the universal ribosomal protein uS3 family. As to quaternary structure, part of the 30S ribosomal subunit.

Its function is as follows. Binds the lower part of the 30S subunit head. The protein is Small ribosomal subunit protein uS3 of Methanococcus aeolicus (strain ATCC BAA-1280 / DSM 17508 / OCM 812 / Nankai-3).